We begin with the raw amino-acid sequence, 622 residues long: MADGPDEYDTETGCVPLLHPEEIKPQSHYNHGYGEPLGRKTHVDDYSTWDIVKATQYGIYERCRELVEAGYDVRQPDKENVTLLHWAAINNRIDLVKYYISKGAIVDQLGGDLNSTPLHWATRQGHLSMVVQLMKYGADPSLIDGEGCSCIHLAAQFGHTSIVAYLIAKGQDVDMMDQNGMTPLMWAAYRTHSVDPTRLLLTFNVSVNLGDKYHKNTALHWAVLAGNTTVISLLLEAGGNVDAQNVKGESALDLAKQRKNVWMINHLQEARQAKGYDNPSFLRKLKADKEFRQKVMLGTPFLVIWLVGFIADLNIDSWLIKGLMYGGVWATVQFLSKSFFDHSMHSALPLGIYLATKFWMYVTWFFWFWNDLSFLSIHLPFLANSVALFYNFGKSWKSDPGIIKATEEQKKKTIVELAETGSLDLSIFCSTCLIRKPVRSKHCGVCNRCIAKFDHHCPWVGNCVGAGNHRYFMGYLFFLLFMICWMIYGCVSYWGLHCETTYTKDGFWTYITQIATCSPWMFWMFLNSVFHFMWVAVLLMCQMYQITCLGITTNERMNARRYKHFKVTTTSIESPFNHGCVRNIIDFFEFRCCGLFRPVIVDWTRQYTIEYDQISGSGYQLV.

Residues 1–294 (MADGPDEYDT…LKADKEFRQK (294 aa)) lie on the Cytoplasmic side of the membrane. A necessary and sufficient for interaction with DNAJC5 and SNAP25 region spans residues 1–295 (MADGPDEYDT…KADKEFRQKV (295 aa)). ANK repeat units lie at residues 41–76 (THVD…VRQP), 79–108 (ENVT…IVDQ), 113–142 (LNST…DPSL), 146–175 (EGCS…DVDM), 179–209 (NGMT…SVNL), 214–243 (HKNT…NVDA), and 247–276 (KGES…AKGY). The next 2 membrane-spanning stretches (helical) occupy residues 295–315 (VMLG…DLNI) and 316–336 (DSWL…QFLS). The Lumenal segment spans residues 337-347 (KSFFDHSMHSA). Residues 348-368 (LPLGIYLATKFWMYVTWFFWF) form a helical membrane-spanning segment. Over 369-371 (WND) the chain is Cytoplasmic. The helical transmembrane segment at 372 to 392 (LSFLSIHLPFLANSVALFYNF) threads the bilayer. At 393 to 470 (GKSWKSDPGI…GNCVGAGNHR (78 aa)) the chain is on the lumenal side. The region spanning 427–477 (IFCSTCLIRKPVRSKHCGVCNRCIAKFDHHCPWVGNCVGAGNHRYFMGYLF) is the DHHC domain. Cys-457 (S-palmitoyl cysteine intermediate) is an active-site residue. The helical transmembrane segment at 471 to 491 (YFMGYLFFLLFMICWMIYGCV) threads the bilayer. At 492–506 (SYWGLHCETTYTKDG) the chain is on the cytoplasmic side. A helical membrane pass occupies residues 507-526 (FWTYITQIATCSPWMFWMFL). Residues 527 to 529 (NSV) lie on the Lumenal side of the membrane. The chain crosses the membrane as a helical span at residues 530-552 (FHFMWVAVLLMCQMYQITCLGIT). Over 553-622 (TNERMNARRY…QISGSGYQLV (70 aa)) the chain is Cytoplasmic.

Belongs to the DHHC palmitoyltransferase family. AKR/ZDHHC17 subfamily. In terms of assembly, interacts (via ANK repeats) with numerous proteins (via the consensus sequence motif [VIAP]-[VIT]-x-x-Q-P). Interacts (via ANK repeats) with CLIP3. Interacts (via ANK repeats) with HTT. Interacts (via ANK repeats) with DNAJC5 (via C-terminus). Interacts (via ANK repeats) with MAP6. Interacts (via ANK repeats) with SNAP23. Interacts (via ANK repeats) with SNAP25. Interacts (via ANK repeats) with EVL. Interacts with SPRED1 and SPRED3. Interacts with GPM6A and OPTN. May interact (via ANK repeats) with SPRED2. May interact with NTRK1; may regulate its localization and function. In terms of processing, autopalmitoylated. Autopalmitoylation has a regulatory role in ZDHHC17-mediated Mg(2+) transport.

The protein localises to the golgi apparatus membrane. It localises to the cytoplasmic vesicle membrane. Its subcellular location is the presynaptic cell membrane. It catalyses the reaction L-cysteinyl-[protein] + hexadecanoyl-CoA = S-hexadecanoyl-L-cysteinyl-[protein] + CoA. It carries out the reaction L-cysteinyl-[protein] + tetradecanoyl-CoA = S-tetradecanoyl-L-cysteinyl-[protein] + CoA. The enzyme catalyses L-cysteinyl-[protein] + octadecanoyl-CoA = S-octadecanoyl-L-cysteinyl-[protein] + CoA. Functionally, palmitoyltransferase that catalyzes the addition of palmitate onto various protein substrates and is involved in a variety of cellular processes. Has no stringent fatty acid selectivity and in addition to palmitate can also transfer onto target proteins myristate from tetradecanoyl-CoA and stearate from octadecanoyl-CoA. Palmitoyltransferase specific for a subset of neuronal proteins, including SNAP25, DLG4/PSD95, GAD2, SYT1 and HTT. Also palmitoylates neuronal protein GPM6A as well as SPRED1 and SPRED3. Could also play a role in axonogenesis through the regulation of NTRK1 and the downstream ERK1/ERK2 signaling cascade. May be involved in the sorting or targeting of critical proteins involved in the initiating events of endocytosis at the plasma membrane. May play a role in Mg(2+) transport. Could also palmitoylate DNAJC5 and regulate its localization to the Golgi membrane. Palmitoylates CASP6, thereby preventing its dimerization and subsequent activation. In Rattus norvegicus (Rat), this protein is Palmitoyltransferase ZDHHC17.